We begin with the raw amino-acid sequence, 141 residues long: Putative nickel-responsive regulator (141 aa).

Ni(2+) is bound by residues His83, His94, His96, and Cys102.

It belongs to the transcriptional regulatory CopG/NikR family. The cofactor is Ni(2+).

Functionally, transcriptional regulator. In Methanopyrus kandleri (strain AV19 / DSM 6324 / JCM 9639 / NBRC 100938), this protein is Putative nickel-responsive regulator.